A 1336-amino-acid chain; its full sequence is Zinc finger protein 335 (1336 aa).

2 disordered regions span residues Met-1 to Ser-108 and Pro-199 to Pro-222. 2 stretches are compositionally biased toward low complexity: residues Thr-31–Ala-45 and Ser-54–Arg-65. The C2H2-type 1 zinc finger occupies Phe-247–His-270. Disordered stretches follow at residues Ala-282–Ser-398 and Val-415–Ser-442. Residues Glu-300–Glu-331 are compositionally biased toward acidic residues. Residues Leu-339–Leu-349 show a composition bias toward low complexity. The segment covering Arg-350–Leu-361 has biased composition (basic residues). A compositionally biased stretch (basic and acidic residues) spans Pro-362–Ile-373. The segment covering Val-378–Pro-387 has biased composition (polar residues). 8 consecutive C2H2-type zinc fingers follow at residues Tyr-465–His-487, Phe-495–His-517, Tyr-523–His-545, Phe-562–His-584, His-590–His-612, Phe-621–His-643, Phe-649–His-672, and Phe-678–His-701. Disordered regions lie at residues Leu-732–Leu-766 and Leu-961–Ser-1013. Residues Pro-752 to Leu-766 are compositionally biased toward pro residues. Phosphoserine is present on residues Ser-975 and Ser-1006. 4 consecutive C2H2-type zinc fingers follow at residues Phe-1018–His-1040, Phe-1046–His-1068, His-1074–His-1096, and Phe-1102–His-1125. Lys-1021 participates in a covalent cross-link: Glycyl lysine isopeptide (Lys-Gly) (interchain with G-Cter in SUMO2). Ser-1148 is modified (phosphoserine).

The protein belongs to the krueppel C2H2-type zinc-finger protein family. As to quaternary structure, interacts with NCOA6; may enhance ligand-dependent transcriptional activation by nuclear hormone receptors. Interacts with CNOT6. Interacts with CNOT9; the interaction is direct. Component of a nuclear receptor-mediated transcription complex composed of at least ZNF335, CCAR2 and EMSY; the complex stimulates the transcription of nuclear receptor target genes such as SOX9 and HOXA1. Within the complex interacts with EMSY and interacts (via C-terminus) with CCAR2. Interacts with members of histone H3'Lys4'(H3K4) methyltransferase complexes ASH2L, CXXC1, KMT2A/MLL1, RBBP5, SETD1A and WDR5. Component of a histone methylation complex composed of at least ZNF335, RBBP5, ASH2L and WDR5; the complex may have histone H3-specific methyltransferase activity, however does not have specificity for 'Lys-4' of histone H3. Interacts with RBBP5 and WDR5. Interacts with ASHL2. Components of this complex may associate with components of the ZNF335-CCAR2-EMSY nuclear receptor-mediated transcription complex to form a complex at least composed of ZNF335, HCFC1, CCAR2, EMSY, MKI67, RBBP5, ASH2L and WDR5. Within this complex also interacts with HCFC1 and MKI67.

The protein resides in the nucleus. In terms of biological role, component or associated component of some histone methyltransferase complexes may regulate transcription through recruitment of those complexes on gene promoters. Enhances ligand-dependent transcriptional activation by nuclear hormone receptors. Plays an important role in neural progenitor cell proliferation and self-renewal through the regulation of specific genes involved brain development, including REST. Also controls the expression of genes involved in somatic development and regulates, for instance, lymphoblast proliferation. In Rattus norvegicus (Rat), this protein is Zinc finger protein 335 (Znf335).